Consider the following 429-residue polypeptide: Glucose-6-phosphate isomerase (429 aa).

E282 serves as the catalytic Proton donor. Active-site residues include H303 and K418.

This sequence belongs to the GPI family.

The protein resides in the cytoplasm. The catalysed reaction is alpha-D-glucose 6-phosphate = beta-D-fructose 6-phosphate. Its pathway is carbohydrate biosynthesis; gluconeogenesis. The protein operates within carbohydrate degradation; glycolysis; D-glyceraldehyde 3-phosphate and glycerone phosphate from D-glucose: step 2/4. In terms of biological role, catalyzes the reversible isomerization of glucose-6-phosphate to fructose-6-phosphate. In Mesomycoplasma hyopneumoniae (strain J / ATCC 25934 / NCTC 10110) (Mycoplasma hyopneumoniae), this protein is Glucose-6-phosphate isomerase.